The primary structure comprises 140 residues: Small ribosomal subunit protein eS12 (140 aa).

This sequence belongs to the eukaryotic ribosomal protein eS12 family. Part of the small subunit (SSU) processome, composed of more than 70 proteins and the RNA chaperone small nucleolar RNA (snoRNA) U3. Subunit of the 40S ribosomal complex.

Its subcellular location is the nucleus. The protein localises to the nucleolus. In terms of biological role, part of the small subunit (SSU) processome, first precursor of the small eukaryotic ribosomal subunit. During the assembly of the SSU processome in the nucleolus, many ribosome biogenesis factors, an RNA chaperone and ribosomal proteins associate with the nascent pre-rRNA and work in concert to generate RNA folding, modifications, rearrangements and cleavage as well as targeted degradation of pre-ribosomal RNA by the RNA exosome. Subunit of the 40S ribosomal complex. Involved in cold-warm shock-induced translocation of the RNA exosome components from the nucleolus to nucleoplasm. The protein is Small ribosomal subunit protein eS12 (rps-12) of Caenorhabditis elegans.